A 465-amino-acid polypeptide reads, in one-letter code: Ribosomal protein uS12 methylthiotransferase RimO (465 aa).

Residues 1 to 117 form the MTTase N-terminal domain; that stretch reads MKVGFISLGC…IVDICEGMPP (117 aa). Positions 10, 46, 80, 150, 154, and 157 each coordinate [4Fe-4S] cluster. Positions 136 to 369 constitute a Radical SAM core domain; the sequence is ATPRHFAYMK…AIQRKIARAR (234 aa). The region spanning 371–442 is the TRAM domain; it reads RGLVGKEVPV…DYDVVGTLLA (72 aa).

It belongs to the methylthiotransferase family. RimO subfamily. The cofactor is [4Fe-4S] cluster.

Its subcellular location is the cytoplasm. It carries out the reaction L-aspartate(89)-[ribosomal protein uS12]-hydrogen + (sulfur carrier)-SH + AH2 + 2 S-adenosyl-L-methionine = 3-methylsulfanyl-L-aspartate(89)-[ribosomal protein uS12]-hydrogen + (sulfur carrier)-H + 5'-deoxyadenosine + L-methionine + A + S-adenosyl-L-homocysteine + 2 H(+). Catalyzes the methylthiolation of an aspartic acid residue of ribosomal protein uS12. The chain is Ribosomal protein uS12 methylthiotransferase RimO from Solibacter usitatus (strain Ellin6076).